The following is a 733-amino-acid chain: Lanosterol synthase (733 aa).

At threonine 2 the chain carries N-acetylthreonine. The stretch at 125 to 166 (REEMVRYLRSVQLPDGGWGLHIEDKSTVFGTALNYVALRILG) is one PFTB 1 repeat. Catalysis depends on aspartate 456, which acts as the Proton donor. PFTB repeat units lie at residues 484-529 (LCDA…MIDY), 561-601 (LNQG…ACMG), and 613-654 (VAQA…HSTC).

It belongs to the terpene cyclase/mutase family. In terms of assembly, monomer.

It is found in the endoplasmic reticulum membrane. The catalysed reaction is (S)-2,3-epoxysqualene = lanosterol. It functions in the pathway terpene metabolism; lanosterol biosynthesis; lanosterol from farnesyl diphosphate: step 3/3. Its function is as follows. Key enzyme in the cholesterol biosynthesis pathway. Catalyzes the cyclization of (S)-2,3 oxidosqualene to lanosterol, a reaction that forms the sterol nucleus. Through the production of lanosterol may regulate lens protein aggregation and increase transparency. The sequence is that of Lanosterol synthase from Mus musculus (Mouse).